The primary structure comprises 169 residues: Large ribosomal subunit protein uL10 (169 aa).

Belongs to the universal ribosomal protein uL10 family. As to quaternary structure, part of the ribosomal stalk of the 50S ribosomal subunit. The N-terminus interacts with L11 and the large rRNA to form the base of the stalk. The C-terminus forms an elongated spine to which L12 dimers bind in a sequential fashion forming a multimeric L10(L12)X complex.

In terms of biological role, forms part of the ribosomal stalk, playing a central role in the interaction of the ribosome with GTP-bound translation factors. The protein is Large ribosomal subunit protein uL10 of Onion yellows phytoplasma (strain OY-M).